We begin with the raw amino-acid sequence, 216 residues long: Elongation factor 1-beta (216 aa).

It belongs to the EF-1-beta/EF-1-delta family. As to quaternary structure, EF-1 is composed of 4 subunits: alpha, beta, delta, and gamma. Interacts with actin.

The protein resides in the cytoplasm. Functionally, EF-1-beta and EF-1-delta stimulate the exchange of GDP bound to EF-1-alpha to GTP. This Dictyostelium discoideum (Social amoeba) protein is Elongation factor 1-beta (efa1B).